A 203-amino-acid polypeptide reads, in one-letter code: V-type ATP synthase subunit D (203 aa).

Belongs to the V-ATPase D subunit family.

Functionally, produces ATP from ADP in the presence of a proton gradient across the membrane. The sequence is that of V-type ATP synthase subunit D from Thermotoga neapolitana (strain ATCC 49049 / DSM 4359 / NBRC 107923 / NS-E).